The chain runs to 59 residues: Large ribosomal subunit protein bL33 (59 aa).

It belongs to the bacterial ribosomal protein bL33 family.

In Borrelia recurrentis (strain A1), this protein is Large ribosomal subunit protein bL33.